The sequence spans 492 residues: Cobyric acid synthase (492 aa).

In terms of domain architecture, GATase cobBQ-type spans 252–440; sequence RPKIAVLAYP…VHGLFADDHL (189 aa). Catalysis depends on Cys-334, which acts as the Nucleophile. His-432 is an active-site residue.

Belongs to the CobB/CobQ family. CobQ subfamily.

It functions in the pathway cofactor biosynthesis; adenosylcobalamin biosynthesis. Functionally, catalyzes amidations at positions B, D, E, and G on adenosylcobyrinic A,C-diamide. NH(2) groups are provided by glutamine, and one molecule of ATP is hydrogenolyzed for each amidation. The chain is Cobyric acid synthase from Bradyrhizobium sp. (strain BTAi1 / ATCC BAA-1182).